The chain runs to 197 residues: MIGRLSGKLIEKLPPQVVVDVNGVGYEVDVPMTTFYQLPALGQPCTLFTHLAVREDAHLLYGFASKEERQTFRQLIKVTGIGAKIALAILSGMTADELAIAVASEDIKRLSAVPGIGKKTAERLVLELRGKLATGGNLTVPGGLPFAATPDEKSDIVNALLALGYNEKEAAAATKSLPADVTVSEGVRLALKSLMKV.

The domain I stretch occupies residues 1–64; sequence MIGRLSGKLI…EDAHLLYGFA (64 aa). The interval 65–143 is domain II; it reads SKEERQTFRQ…TGGNLTVPGG (79 aa). Positions 143–147 are flexible linker; it reads GLPFA. The segment at 148–197 is domain III; it reads ATPDEKSDIVNALLALGYNEKEAAAATKSLPADVTVSEGVRLALKSLMKV.

The protein belongs to the RuvA family. In terms of assembly, homotetramer. Forms an RuvA(8)-RuvB(12)-Holliday junction (HJ) complex. HJ DNA is sandwiched between 2 RuvA tetramers; dsDNA enters through RuvA and exits via RuvB. An RuvB hexamer assembles on each DNA strand where it exits the tetramer. Each RuvB hexamer is contacted by two RuvA subunits (via domain III) on 2 adjacent RuvB subunits; this complex drives branch migration. In the full resolvosome a probable DNA-RuvA(4)-RuvB(12)-RuvC(2) complex forms which resolves the HJ.

Its subcellular location is the cytoplasm. The RuvA-RuvB-RuvC complex processes Holliday junction (HJ) DNA during genetic recombination and DNA repair, while the RuvA-RuvB complex plays an important role in the rescue of blocked DNA replication forks via replication fork reversal (RFR). RuvA specifically binds to HJ cruciform DNA, conferring on it an open structure. The RuvB hexamer acts as an ATP-dependent pump, pulling dsDNA into and through the RuvAB complex. HJ branch migration allows RuvC to scan DNA until it finds its consensus sequence, where it cleaves and resolves the cruciform DNA. This chain is Holliday junction branch migration complex subunit RuvA, found in Chromobacterium violaceum (strain ATCC 12472 / DSM 30191 / JCM 1249 / CCUG 213 / NBRC 12614 / NCIMB 9131 / NCTC 9757 / MK).